The following is a 241-amino-acid chain: Pyridoxine 5'-phosphate synthase (241 aa).

A 3-amino-2-oxopropyl phosphate-binding site is contributed by asparagine 7. Aspartate 9–histidine 10 contributes to the 1-deoxy-D-xylulose 5-phosphate binding site. Arginine 18 is a binding site for 3-amino-2-oxopropyl phosphate. Residue histidine 43 is the Proton acceptor of the active site. Arginine 45 and histidine 50 together coordinate 1-deoxy-D-xylulose 5-phosphate. Glutamate 70 functions as the Proton acceptor in the catalytic mechanism. 1-deoxy-D-xylulose 5-phosphate is bound at residue threonine 100. Histidine 191 (proton donor) is an active-site residue. Residues glycine 192 and glycine 213–histidine 214 contribute to the 3-amino-2-oxopropyl phosphate site.

The protein belongs to the PNP synthase family. As to quaternary structure, homooctamer; tetramer of dimers.

The protein localises to the cytoplasm. The enzyme catalyses 3-amino-2-oxopropyl phosphate + 1-deoxy-D-xylulose 5-phosphate = pyridoxine 5'-phosphate + phosphate + 2 H2O + H(+). The protein operates within cofactor biosynthesis; pyridoxine 5'-phosphate biosynthesis; pyridoxine 5'-phosphate from D-erythrose 4-phosphate: step 5/5. Catalyzes the complicated ring closure reaction between the two acyclic compounds 1-deoxy-D-xylulose-5-phosphate (DXP) and 3-amino-2-oxopropyl phosphate (1-amino-acetone-3-phosphate or AAP) to form pyridoxine 5'-phosphate (PNP) and inorganic phosphate. The sequence is that of Pyridoxine 5'-phosphate synthase from Nostoc punctiforme (strain ATCC 29133 / PCC 73102).